Here is a 277-residue protein sequence, read N- to C-terminus: NLP effector protein Pc109174 (277 aa).

An N-terminal signal peptide occupies residues 1–19 (MNLVPALVLLLALAQTVLG). The Hepta-peptide GHRHDWE motif motif lies at 119 to 125 (KSRHLWA). An N-linked (GlcNAc...) asparagine glycan is attached at Asn-199.

The protein belongs to the Necrosis inducing protein (NPP1) family.

Its subcellular location is the secreted. Secreted effector that contributes strongly to virulence during infection by P.capsici. Induces cell death in the Solanaceae, including hot pepper. The chain is NLP effector protein Pc109174 from Phytophthora capsici.